The primary structure comprises 66 residues: Phylloseptin-H9 (66 aa).

Positions 1–22 (MAFLKKSLFLVLFLGLVSLSIC) are cleaved as a signal peptide. Positions 23–44 (EEEKRETEEEENDQEEDDKSEE) are excised as a propeptide. The segment at 24–44 (EEKRETEEEENDQEEDDKSEE) is disordered. The span at 30-41 (EEEENDQEEDDK) shows a compositional bias: acidic residues. At Leu65 the chain carries Leucine amide.

As to expression, expressed by the skin glands.

Its subcellular location is the secreted. Has antimicrobial activity. The chain is Phylloseptin-H9 from Pithecopus hypochondrialis (Orange-legged leaf frog).